We begin with the raw amino-acid sequence, 361 residues long: Probable dual-specificity RNA methyltransferase RlmN (361 aa).

E91 (proton acceptor) is an active-site residue. The region spanning 97–329 (QHYGLSVCVT…KKKGGNCVVR (233 aa)) is the Radical SAM core domain. A disulfide bridge links C104 with C340. [4Fe-4S] cluster-binding residues include C111, C115, and C118. S-adenosyl-L-methionine-binding positions include 163-164 (GE), S195, 218-220 (SLH), and N296. The active-site S-methylcysteine intermediate is the C340.

This sequence belongs to the radical SAM superfamily. RlmN family. [4Fe-4S] cluster is required as a cofactor.

The protein localises to the cytoplasm. It carries out the reaction adenosine(2503) in 23S rRNA + 2 reduced [2Fe-2S]-[ferredoxin] + 2 S-adenosyl-L-methionine = 2-methyladenosine(2503) in 23S rRNA + 5'-deoxyadenosine + L-methionine + 2 oxidized [2Fe-2S]-[ferredoxin] + S-adenosyl-L-homocysteine. It catalyses the reaction adenosine(37) in tRNA + 2 reduced [2Fe-2S]-[ferredoxin] + 2 S-adenosyl-L-methionine = 2-methyladenosine(37) in tRNA + 5'-deoxyadenosine + L-methionine + 2 oxidized [2Fe-2S]-[ferredoxin] + S-adenosyl-L-homocysteine. Functionally, specifically methylates position 2 of adenine 2503 in 23S rRNA and position 2 of adenine 37 in tRNAs. This Streptococcus pneumoniae serotype 2 (strain D39 / NCTC 7466) protein is Probable dual-specificity RNA methyltransferase RlmN.